We begin with the raw amino-acid sequence, 1154 residues long: DNA-directed RNA polymerase, mitochondrial (1154 aa).

The transit peptide at 1–30 directs the protein to the mitochondrion; sequence MLRRKIQTYLSRSHIRRGLCGLRFFQTQRL. Residues 221–243 are disordered; the sequence is ESENGKDQNGDSSLKEKQPDVET. Residues 223 to 240 are compositionally biased toward basic and acidic residues; sequence ENGKDQNGDSSLKEKQPD. Catalysis depends on residues aspartate 821, lysine 890, and aspartate 1061.

It belongs to the phage and mitochondrial RNA polymerase family.

The protein localises to the mitochondrion. The enzyme catalyses RNA(n) + a ribonucleoside 5'-triphosphate = RNA(n+1) + diphosphate. DNA-dependent RNA polymerase catalyzes the transcription of DNA into RNA using the four ribonucleoside triphosphates as substrates. Combines in the mitochondrion with mitochondrial transcription factor mtf1 as a holoenzyme to recognize and initiate transcription at the core mitochondrial promoters. The chain is DNA-directed RNA polymerase, mitochondrial (rpo41) from Schizosaccharomyces pombe (strain 972 / ATCC 24843) (Fission yeast).